The following is a 425-amino-acid chain: 3-phosphoshikimate 1-carboxyvinyltransferase (425 aa).

3-phosphoshikimate is bound by residues lysine 23, serine 24, and arginine 28. Position 23 (lysine 23) interacts with phosphoenolpyruvate. Positions 96 and 124 each coordinate phosphoenolpyruvate. 3-phosphoshikimate-binding residues include threonine 170, serine 171, glutamine 172, serine 198, aspartate 314, and lysine 341. Glutamine 172 is a binding site for phosphoenolpyruvate. Catalysis depends on aspartate 314, which acts as the Proton acceptor. Arginine 345, arginine 386, and lysine 411 together coordinate phosphoenolpyruvate.

Belongs to the EPSP synthase family. As to quaternary structure, monomer.

It localises to the cytoplasm. It catalyses the reaction 3-phosphoshikimate + phosphoenolpyruvate = 5-O-(1-carboxyvinyl)-3-phosphoshikimate + phosphate. It functions in the pathway metabolic intermediate biosynthesis; chorismate biosynthesis; chorismate from D-erythrose 4-phosphate and phosphoenolpyruvate: step 6/7. In terms of biological role, catalyzes the transfer of the enolpyruvyl moiety of phosphoenolpyruvate (PEP) to the 5-hydroxyl of shikimate-3-phosphate (S3P) to produce enolpyruvyl shikimate-3-phosphate and inorganic phosphate. This Nostoc sp. (strain PCC 7120 / SAG 25.82 / UTEX 2576) protein is 3-phosphoshikimate 1-carboxyvinyltransferase.